Here is a 275-residue protein sequence, read N- to C-terminus: Thioredoxin-like 1-1, chloroplastic (275 aa).

A chloroplast-targeting transit peptide spans 1–72 (MTEVISKTSL…GDSQDESFRR (72 aa)). The Thioredoxin domain maps to 73–206 (SSAITAQTTL…FRDALAKHGP (134 aa)). Active-site nucleophile residues include Cys129 and Cys132. Cys129 and Cys132 are oxidised to a cystine. The tract at residues 238-275 (KPVPVEKEAATPDSNPSLPVPLPSMSSNDEKTLVSAGR) is disordered. Low complexity predominate over residues 249–264 (PDSNPSLPVPLPSMSS).

This sequence belongs to the thioredoxin family.

The protein localises to the plastid. It localises to the chloroplast. Functionally, thiol-disulfide oxidoreductase that may participate in various redox reactions. Possesses insulin disulfide bonds reducing activity. The protein is Thioredoxin-like 1-1, chloroplastic of Arabidopsis thaliana (Mouse-ear cress).